The chain runs to 485 residues: MTVETFDPNKVANKTTTLETPVKVLSDNQSSQQGVGSRIGFVSLGCPKNLVDSERILTQLRTEGYDVVPTYNDADLVIVNTCGFIDAAVEESLDTIGEALKENGKVIVTGCLGVKEDEIRELHPNVLAITGPHAYETVVEQVHEHLPKPQHNPFADLIPDHGVKLTPRHYAYLKISEGCNHRCTFCIIPSMRGDLVSRPVGNVLDEAKRLKEAGVKELLVISQDTSAYGVDVKHRTGFWNGMPVKTHMQQLCEQLGEMGIWVRLHYVYPYPHVDDLIPLMNDGKILPYLDIPFQHANKRILRLMKRPGSAERVLERVKKWREQCPSLVIRSTFIVGFPGETEEEFEELLDFLREAQLDRVGAFAYSPVEGARANDLPDPVPEDIKQERLARFMEVQGEISAARLKARIGNEYQVVIDSVDAEGAVGRTYADAPEVDGLVHLNGVYDVKPGDRVWAEVIHANEHDVWAVLSEDQDDEEAHATEGAE.

In terms of domain architecture, MTTase N-terminal spans 37–147 (SRIGFVSLGC…VVEQVHEHLP (111 aa)). Residues C46, C82, C111, C179, C183, and C186 each coordinate [4Fe-4S] cluster. The 238-residue stretch at 165 to 402 (LTPRHYAYLK…MEVQGEISAA (238 aa)) folds into the Radical SAM core domain. The TRAM domain occupies 405 to 471 (KARIGNEYQV…EHDVWAVLSE (67 aa)).

The protein belongs to the methylthiotransferase family. RimO subfamily. It depends on [4Fe-4S] cluster as a cofactor.

The protein resides in the cytoplasm. It catalyses the reaction L-aspartate(89)-[ribosomal protein uS12]-hydrogen + (sulfur carrier)-SH + AH2 + 2 S-adenosyl-L-methionine = 3-methylsulfanyl-L-aspartate(89)-[ribosomal protein uS12]-hydrogen + (sulfur carrier)-H + 5'-deoxyadenosine + L-methionine + A + S-adenosyl-L-homocysteine + 2 H(+). Catalyzes the methylthiolation of an aspartic acid residue of ribosomal protein uS12. The polypeptide is Ribosomal protein uS12 methylthiotransferase RimO (Alteromonas mediterranea (strain DSM 17117 / CIP 110805 / LMG 28347 / Deep ecotype)).